Here is an 88-residue protein sequence, read N- to C-terminus: N-alpha-acetyltransferase 38, NatC auxiliary subunit (88 aa).

In terms of domain architecture, Sm spans 1-72 (MDILKLSDFI…VKTIMIDKPV (72 aa)).

Component of the N-terminal acetyltransferase C (NatC) complex, composed of the catalytic subunit Naa30/MAK3, a large auxiliary subunit Naa35/MAK10 and a small auxiliary subunit Naa38/MAK31.

Its function is as follows. Component of the NatC N-terminal acetyltransferase, which associates with the ribosome to acetylate nascent protein chains in a cotranslational manner. NatC acetylates protein N-termini starting with methionine, followed by a hydrophobic or amphipathic amino acid, with amino acids at positions 3 and 4 also contributing to NatC recognition. The first 4 amino acids of cognate substrates are recognized at the Naa30/MAK3-Naa35/MAK10 interface. NatC-dependent acetylation targets various substrate proteins to specific subcellular sites, including isoform 2 of tRNA-specific methyltransferase Trm1 to the inner nuclear membrane. Catalyzes the acetylation of the N-terminal Met of ARF-like GTPase ARL3, which is required for its Golgi localization via interaction with the Golgi-localized integral membrane protein SYS1, which may serve as a receptor for acetylated ARL3. Catalyzes the acetylation of the N-terminal Met of L-A virus Gag protein. MAK31 is necessary for the structural stability of L-A double-stranded RNA-containing particles. Necessary for growth at 37 degrees Celsius as well as for maintenance of the killer plasmid. This chain is N-alpha-acetyltransferase 38, NatC auxiliary subunit (MAK31), found in Saccharomyces cerevisiae (strain ATCC 204508 / S288c) (Baker's yeast).